The chain runs to 183 residues: Mitochondrial import inner membrane translocase subunit tim17 (183 aa).

The next 3 membrane-spanning stretches (helical) occupy residues 13-33, 57-77, and 107-127; these read AGGA…GLGF, GGNF…LSYI, and VQAA…QHMM. Positions 131 to 141 are enriched in polar residues; the sequence is MQAQQEEMTQQ. The tract at residues 131-183 is disordered; it reads MQAQQEEMTQQHLEERKRYEEERKQREGERKKLNENGKSKKNKQQQNGENDLD. Over residues 142–168 the composition is skewed to basic and acidic residues; sequence HLEERKRYEEERKQREGERKKLNENGK. Positions 174–183 are enriched in low complexity; that stretch reads QQQNGENDLD.

It belongs to the Tim17/Tim22/Tim23 family.

The protein localises to the mitochondrion inner membrane. Functionally, may be involved in the translocation of transit peptide-containing proteins across the mitochondrial inner membrane. This chain is Mitochondrial import inner membrane translocase subunit tim17 (timm17), found in Dictyostelium discoideum (Social amoeba).